The sequence spans 838 residues: Protein kintoun (838 aa).

Disordered regions lie at residues R106 to S125, N212 to E238, L370 to P411, N557 to S696, and Q776 to D838. Positions D114 to S125 are enriched in polar residues. The span at L370–V380 shows a compositional bias: basic and acidic residues. S378 bears the Phosphoserine mark. Acidic residues predominate over residues P389–L398. The segment covering N557–A572 has biased composition (basic and acidic residues). The segment covering E583–E592 has biased composition (acidic residues). Residues D601 to K611 show a composition bias toward low complexity. Composition is skewed to basic residues over residues K612–K623 and R673–S683. At S781 the chain carries Phosphoserine. Over residues E789–P802 the composition is skewed to basic and acidic residues.

This sequence belongs to the PIH1 family. Kintoun subfamily. As to quaternary structure, interacts with Pp1alpha-96A, Pp1-87B, Pp1-13C and flw.

Its subcellular location is the cytoplasm. Required for cytoplasmic pre-assembly of axonemal dyneins, thereby playing a central role in motility in cilia and flagella. Involved in pre-assembly of dynein arm complexes in the cytoplasm before intraflagellar transport loads them for the ciliary compartment. The chain is Protein kintoun from Drosophila sechellia (Fruit fly).